The sequence spans 240 residues: MESPRIGVVRDSMLHRPLLIKPTLGKSKSRGLSYPGPEFVFGTATTVQDGGVQEAISNWHTHTMSTTHRAAERDFIALNREGVKSGLVTAKELHQYRATHDIRRKPLTREGFRRSAPPRLSPDDSFFVSNRPSTPISELIEYKYAQRWLEEQQVRDRVLQAHQHKKAQLGRIQDTRTTLLRKSQPLPEAPSTWKLPRFQKVGAALDTFRDPEARKKAMNAHCSESVSRRGILGQGTYTVD.

This sequence belongs to the CFAP77 family.

The protein localises to the cytoplasm. It is found in the cytoskeleton. It localises to the cilium axoneme. The protein resides in the flagellum axoneme. In terms of biological role, microtubule inner protein (MIP) part of the dynein-decorated doublet microtubules (DMTs) in cilia axoneme, which is required for motile cilia beating. This chain is Cilia- and flagella-associated protein 77, found in Danio rerio (Zebrafish).